A 493-amino-acid polypeptide reads, in one-letter code: Xaa-Pro dipeptidase (493 aa).

Alanine 2 bears the N-acetylalanine mark. The residue at position 167 (serine 167) is a Phosphoserine. An a dipeptide-binding site is contributed by histidine 255. Aspartate 276, aspartate 287, and histidine 370 together coordinate Mn(2+). Aspartate 287 contributes to the a dipeptide binding site. A dipeptide-binding residues include histidine 377 and arginine 398. Mn(2+) contacts are provided by glutamate 412 and glutamate 452.

The protein belongs to the peptidase M24B family. Eukaryotic-type prolidase subfamily. Homodimer. Mn(2+) serves as cofactor.

It carries out the reaction Xaa-L-Pro dipeptide + H2O = an L-alpha-amino acid + L-proline. Its function is as follows. Dipeptidase that catalyzes the hydrolysis of dipeptides with a prolyl (Xaa-Pro) or hydroxyprolyl residue in the C-terminal position. The preferred dipeptide substrate is Gly-Pro, but other Xaa-Pro dipeptides, such as Ala-Pro, Met-Pro, Phe-Pro, Val-Pro and Leu-Pro, can be cleaved. Plays an important role in collagen metabolism because the high level of iminoacids in collagen. This is Xaa-Pro dipeptidase (PEPD) from Pongo abelii (Sumatran orangutan).